Reading from the N-terminus, the 540-residue chain is Glucose-6-phosphate isomerase (540 aa).

Catalysis depends on glutamate 350, which acts as the Proton donor. Catalysis depends on residues histidine 381 and lysine 503.

It belongs to the GPI family.

Its subcellular location is the cytoplasm. It catalyses the reaction alpha-D-glucose 6-phosphate = beta-D-fructose 6-phosphate. It participates in carbohydrate biosynthesis; gluconeogenesis. The protein operates within carbohydrate degradation; glycolysis; D-glyceraldehyde 3-phosphate and glycerone phosphate from D-glucose: step 2/4. In terms of biological role, catalyzes the reversible isomerization of glucose-6-phosphate to fructose-6-phosphate. The polypeptide is Glucose-6-phosphate isomerase (Burkholderia orbicola (strain AU 1054)).